Reading from the N-terminus, the 114-residue chain is uncharacterized protein (114 aa).

The segment at 1–114 is disordered; it reads MSTAASSRMR…HASQSPDTAY (114 aa). Positions 32–43 are enriched in low complexity; it reads CRRVPSRPCRPV.

This is an uncharacterized protein from Human adenovirus B serotype 7 (HAdV-7).